Consider the following 210-residue polypeptide: MMTNFKFALKNLKVNFTSENIDKLRFYIEKVLLFSDRFNLVSNNVRNFDAMLLHALDSVSGLPIVKDKNLRQVLDVGSGAGFPGIVLALFDRCRKYVLLERSNKKAIFLKMISLELGLENVEVLEHNVEEEQNKYEFITIRAFGDIRKYANILGSILKSGGLIMAYKGKFDKVEFEMSYVKNLFDKVEIKSSEVISDKERYFLLLYDYKC.

S-adenosyl-L-methionine contacts are provided by residues glycine 77, phenylalanine 82, 100-102 (ERS), 128-129 (VE), and arginine 141.

It belongs to the methyltransferase superfamily. RNA methyltransferase RsmG family.

It localises to the cytoplasm. In terms of biological role, specifically methylates the N7 position of a guanine in 16S rRNA. The chain is Ribosomal RNA small subunit methyltransferase G from Borrelia recurrentis (strain A1).